The following is a 155-amino-acid chain: Non-secretory ribonuclease (155 aa).

An N-terminal signal peptide occupies residues 1-25; that stretch reads MGPKLLESRLCLLLLLGLVLMLASC. Residue Lys-33 participates in substrate binding. The active-site Proton acceptor is the His-38. Asn-41 is a glycosylation site (N-linked (GlcNAc...) asparagine). Cystine bridges form between Cys-47/Cys-106, Cys-61/Cys-118, Cys-79/Cys-133, and Cys-86/Cys-94. A 3'-nitrotyrosine modification is found at Tyr-57. 62–66 lines the substrate pocket; that stretch reads KDINT. 3 N-linked (GlcNAc...) asparagine glycosylation sites follow: Asn-83, Asn-88, and Asn-107. Residue His-150 is the Proton donor of the active site.

Belongs to the pancreatic ribonuclease family. As to quaternary structure, interacts with and forms a tight 1:1 complex with RNH1. Dimerization of two such complexes may occur.

The protein localises to the lysosome. Its subcellular location is the cytoplasmic granule. The enzyme catalyses an [RNA] containing cytidine + H2O = an [RNA]-3'-cytidine-3'-phosphate + a 5'-hydroxy-ribonucleotide-3'-[RNA].. It catalyses the reaction an [RNA] containing uridine + H2O = an [RNA]-3'-uridine-3'-phosphate + a 5'-hydroxy-ribonucleotide-3'-[RNA].. Its function is as follows. This is a non-secretory ribonuclease. It is a pyrimidine specific nuclease with a slight preference for U. Cytotoxin and helminthotoxin. Possesses a wide variety of biological activities. The polypeptide is Non-secretory ribonuclease (Rnase2) (Mus musculus (Mouse)).